The sequence spans 201 residues: Pyridoxal 5'-phosphate synthase subunit PdxT (201 aa).

An L-glutamine-binding site is contributed by 50 to 52; sequence GES. The Nucleophile role is filled by C82. L-glutamine contacts are provided by residues R115 and 143-144; that span reads IR. Active-site charge relay system residues include H179 and E181.

This sequence belongs to the glutaminase PdxT/SNO family. In the presence of PdxS, forms a dodecamer of heterodimers. Only shows activity in the heterodimer.

The enzyme catalyses aldehydo-D-ribose 5-phosphate + D-glyceraldehyde 3-phosphate + L-glutamine = pyridoxal 5'-phosphate + L-glutamate + phosphate + 3 H2O + H(+). It carries out the reaction L-glutamine + H2O = L-glutamate + NH4(+). It functions in the pathway cofactor biosynthesis; pyridoxal 5'-phosphate biosynthesis. Catalyzes the hydrolysis of glutamine to glutamate and ammonia as part of the biosynthesis of pyridoxal 5'-phosphate. The resulting ammonia molecule is channeled to the active site of PdxS. The sequence is that of Pyridoxal 5'-phosphate synthase subunit PdxT from Deinococcus geothermalis (strain DSM 11300 / CIP 105573 / AG-3a).